Reading from the N-terminus, the 354-residue chain is Homer protein homolog 1 (354 aa).

The 110-residue stretch at 1-110 (MGEQPIFSTR…EKFQEFKEAA (110 aa)) folds into the WH1 domain. The residue at position 2 (G2) is an N-acetylglycine. The segment at 114-173 (KEKSQEKMELTSTPSQESAGGDLQSPLTPESINGTDDERTPDVTQNSEPRAEPTQNALPF) is disordered. Polar residues-rich tracts occupy residues 138–147 (SPLTPESING) and 155–173 (DVTQNSEPRAEPTQNALPF). Residues 181–352 (KHWEAELATL…LRDNLAKLLE (172 aa)) adopt a coiled-coil conformation. A required for tetramerization region spans residues 290-354 (KLQEVEIRNK…DNLAKLLECS (65 aa)). Phosphoserine is present on S306.

It belongs to the Homer family. Tetramer; this tetrameric structure is critical for forming the high-order complex with SHANK1, which in turn is necessary for the structural and functional integrity of dendritic spines. Interacts with GRM1, GRM5, ITPR1, DNM3, RYR1, RYR2 and SHANK3. Interacts with IFT57 and OPHN1. Isoform 1 encodes a coiled-coil structure that mediates homo- and heteromultimerization. Interacts with SHANK1; forms high-order polymerized complex with a mesh-like network structure, at least composed of SHANK1, HOMER1 and DLGAP1; the complex formation is SHANK1 multimerization dependent. Interacts with NFATC4. Interacts with DAGLA (via PPXXF motif); this interaction is required for the cell membrane localization of DAGLA. Interacts with SRGAP2.

The protein resides in the cytoplasm. The protein localises to the postsynaptic density. It is found in the synapse. Its subcellular location is the cell projection. It localises to the dendritic spine. Postsynaptic density scaffolding protein. Binds and cross-links cytoplasmic regions of GRM1, GRM5, ITPR1, DNM3, RYR1, RYR2, SHANK1 and SHANK3. By physically linking GRM1 and GRM5 with ER-associated ITPR1 receptors, it aids the coupling of surface receptors to intracellular calcium release. May also couple GRM1 to PI3 kinase through its interaction with AGAP2. Isoform 1 regulates the trafficking and surface expression of GRM5. Isoform 3 acts as a natural dominant negative, in dynamic competition with constitutively expressed isoform 1 to regulate synaptic metabotropic glutamate function. Isoform 3, may be involved in the structural changes that occur at synapses during long-lasting neuronal plasticity and development. Forms a high-order complex with SHANK1, which in turn is necessary for the structural and functional integrity of dendritic spines. Negatively regulates T cell activation by inhibiting the calcineurin-NFAT pathway. Acts by competing with calcineurin/PPP3CA for NFAT protein binding, hence preventing NFAT activation by PPP3CA. This chain is Homer protein homolog 1, found in Homo sapiens (Human).